Reading from the N-terminus, the 132-residue chain is Small ribosomal subunit protein uS8 (132 aa).

Belongs to the universal ribosomal protein uS8 family. As to quaternary structure, part of the 30S ribosomal subunit. Contacts proteins S5 and S12.

In terms of biological role, one of the primary rRNA binding proteins, it binds directly to 16S rRNA central domain where it helps coordinate assembly of the platform of the 30S subunit. This is Small ribosomal subunit protein uS8 from Afipia carboxidovorans (strain ATCC 49405 / DSM 1227 / KCTC 32145 / OM5) (Oligotropha carboxidovorans).